Here is a 38-residue protein sequence, read N- to C-terminus: A2-specific pheromone (38 aa).

Cysteine methyl ester is present on Cys35. Cys35 is lipidated: S-farnesyl cysteine. Positions 36–38 (LIA) are cleaved as a propeptide — removed in mature form.

It localises to the cell membrane. Functionally, mating pheromone for A2 allele. The polypeptide is A2-specific pheromone (MFA2) (Mycosarcoma maydis (Corn smut fungus)).